The primary structure comprises 149 residues: MTPKVTIYTDGACKGNPGPGGWGAILFYGDKKKEICGGEPGTTNNRMELMAAIQALELLNRPCVVELHTDSQYVMKGIQEWIRGWKARGWKTADKSPVKNDDLWKRLDAARARHDVDWRWVKGHAGHPLNERADALANEGLRQANPRVI.

The RNase H type-1 domain maps to 1 to 142 (MTPKVTIYTD…ADALANEGLR (142 aa)). Mg(2+)-binding residues include D10, E48, D70, and D134.

The protein belongs to the RNase H family. Monomer. The cofactor is Mg(2+).

The protein resides in the cytoplasm. It catalyses the reaction Endonucleolytic cleavage to 5'-phosphomonoester.. Endonuclease that specifically degrades the RNA of RNA-DNA hybrids. This Caulobacter vibrioides (strain ATCC 19089 / CIP 103742 / CB 15) (Caulobacter crescentus) protein is Ribonuclease HI.